The following is a 462-amino-acid chain: L-seryl-tRNA(Sec) selenium transferase (462 aa).

Position 294 is an N6-(pyridoxal phosphate)lysine (lysine 294).

It belongs to the SelA family. As to quaternary structure, homodecamer; pentamer of dimers. Binds only one seryl-tRNA(Sec) per dimer. Pyridoxal 5'-phosphate is required as a cofactor.

The protein resides in the cytoplasm. The enzyme catalyses L-seryl-tRNA(Sec) + selenophosphate + H(+) = L-selenocysteinyl-tRNA(Sec) + phosphate. It functions in the pathway aminoacyl-tRNA biosynthesis; selenocysteinyl-tRNA(Sec) biosynthesis; selenocysteinyl-tRNA(Sec) from L-seryl-tRNA(Sec) (bacterial route): step 1/1. Its function is as follows. Converts seryl-tRNA(Sec) to selenocysteinyl-tRNA(Sec) required for selenoprotein biosynthesis. This chain is L-seryl-tRNA(Sec) selenium transferase, found in Yersinia enterocolitica serotype O:8 / biotype 1B (strain NCTC 13174 / 8081).